Consider the following 123-residue polypeptide: Small ribosomal subunit protein eS8 (123 aa).

The interval 1–38 is disordered; sequence MKDQGRSPRKRTGGRRRPNHKKKKHELGKDTVETQVGE. Positions 7–26 are enriched in basic residues; sequence SPRKRTGGRRRPNHKKKKHE.

Part of the 30S ribosomal subunit.

This chain is Small ribosomal subunit protein eS8 (rps8e), found in Haloarcula marismortui (strain ATCC 43049 / DSM 3752 / JCM 8966 / VKM B-1809) (Halobacterium marismortui).